Here is a 303-residue protein sequence, read N- to C-terminus: Vesicle-trafficking protein SEC22c (303 aa).

The Cytoplasmic portion of the chain corresponds to 1-183 (MSMILFASIV…EPAPNLRMKP (183 aa)). The 112-residue stretch at 8 to 119 (SIVRVRDGLP…YAFLEFDSVI (112 aa)) folds into the Longin domain. A helical transmembrane segment spans residues 184 to 204 (VTALGVLSLVLNIMCAALNLI). The Lumenal segment spans residues 205–223 (RGVHLAEHSLQVAQEEVGN). A helical transmembrane segment spans residues 224 to 244 (ILAFFIPSVACIVQCYLYLFY). At 245-248 (SPAR) the chain is on the cytoplasmic side. Residues 249–269 (TLKVLLMLASICLGNAYLHGL) traverse the membrane as a helical segment. Position 270 (R270) is a topological domain, lumenal. A helical transmembrane segment spans residues 271 to 291 (NTWQILFHVGVAFLSSYQILT). Topologically, residues 292-303 (RQLQERQSDYGV) are cytoplasmic.

The protein belongs to the synaptobrevin family.

It is found in the endoplasmic reticulum membrane. May be involved in vesicle transport between the ER and the Golgi complex. This is Vesicle-trafficking protein SEC22c (Sec22c) from Mus musculus (Mouse).